Consider the following 289-residue polypeptide: Thiosulfate sulfurtransferase (289 aa).

The Rhodanese 1 domain maps to V24–A142. The tract at residues E143–K158 is hinge. The 113-residue stretch at G172–K284 folds into the Rhodanese 2 domain. R186 provides a ligand contact to substrate. Catalysis depends on C244, which acts as the Cysteine persulfide intermediate. K246 contacts substrate.

As to quaternary structure, monomer. In terms of tissue distribution, expressed in numerous tissues.

Its subcellular location is the mitochondrion matrix. The catalysed reaction is thiosulfate + hydrogen cyanide = thiocyanate + sulfite + 2 H(+). In terms of biological role, together with MRPL18, acts as a mitochondrial import factor for the cytosolic 5S rRNA. Only the nascent unfolded cytoplasmic form is able to bind to the 5S rRNA. Formation of iron-sulfur complexes and cyanide detoxification. The protein is Thiosulfate sulfurtransferase (TST) of Gallus gallus (Chicken).